The chain runs to 236 residues: Peroxisomal membrane protein 11D (236 aa).

Position 2 is an N-acetylglycine (glycine 2). The Cytoplasmic segment spans residues glycine 2 to lysine 92. The chain crosses the membrane as a helical span at residues asparagine 93–glycine 109. The Lumenal portion of the chain corresponds to arginine 110–threonine 207. The chain crosses the membrane as a helical span at residues proline 208–leucine 227. Topologically, residues proline 228 to proline 236 are cytoplasmic.

Belongs to the peroxin-11 family. In terms of assembly, homooligomer. Interacts with ARC5 and FIS1B on peroxisomes. Expressed in developing siliques.

The protein localises to the peroxisome membrane. Functionally, involved in peroxisomal proliferation. Promotes peroxisomal duplication, aggregation or elongation without fission. In Arabidopsis thaliana (Mouse-ear cress), this protein is Peroxisomal membrane protein 11D (PEX11D).